We begin with the raw amino-acid sequence, 389 residues long: uncharacterized protein (389 aa).

The next 4 membrane-spanning stretches (helical) occupy residues 31–51 (LFIV…VEVI), 96–116 (IMQI…ALLV), 123–143 (APLV…MFPP), and 152–172 (MIDA…LPSS).

This sequence to M.tuberculosis Rv2571c.

Its subcellular location is the cell membrane. This is an uncharacterized protein from Corynebacterium glutamicum (strain ATCC 13032 / DSM 20300 / JCM 1318 / BCRC 11384 / CCUG 27702 / LMG 3730 / NBRC 12168 / NCIMB 10025 / NRRL B-2784 / 534).